The sequence spans 31 residues: Cytochrome b6-f complex subunit 6 (31 aa).

Residues 3–23 (IITSYFGFLLTALTIASALFI) form a helical membrane-spanning segment.

The protein belongs to the PetL family. The 4 large subunits of the cytochrome b6-f complex are cytochrome b6, subunit IV (17 kDa polypeptide, PetD), cytochrome f and the Rieske protein, while the 4 small subunits are PetG, PetL, PetM and PetN. The complex functions as a dimer.

The protein localises to the plastid. It localises to the chloroplast thylakoid membrane. Its function is as follows. Component of the cytochrome b6-f complex, which mediates electron transfer between photosystem II (PSII) and photosystem I (PSI), cyclic electron flow around PSI, and state transitions. PetL is important for photoautotrophic growth as well as for electron transfer efficiency and stability of the cytochrome b6-f complex. The sequence is that of Cytochrome b6-f complex subunit 6 from Helianthus annuus (Common sunflower).